The sequence spans 284 residues: Shikimate dehydrogenase (NADP(+)) (284 aa).

Shikimate is bound by residues 20 to 22 (SIS) and S67. The active-site Proton acceptor is K71. D83 is an NADP(+) binding site. 2 residues coordinate shikimate: N92 and D107. NADP(+)-binding positions include 129 to 133 (GAGGA) and I227. Y229 contacts shikimate. Residue G250 coordinates NADP(+).

It belongs to the shikimate dehydrogenase family. In terms of assembly, homodimer.

The enzyme catalyses shikimate + NADP(+) = 3-dehydroshikimate + NADPH + H(+). It participates in metabolic intermediate biosynthesis; chorismate biosynthesis; chorismate from D-erythrose 4-phosphate and phosphoenolpyruvate: step 4/7. Involved in the biosynthesis of the chorismate, which leads to the biosynthesis of aromatic amino acids. Catalyzes the reversible NADPH linked reduction of 3-dehydroshikimate (DHSA) to yield shikimate (SA). The chain is Shikimate dehydrogenase (NADP(+)) from Streptococcus pneumoniae (strain CGSP14).